We begin with the raw amino-acid sequence, 89 residues long: Cell division topological specificity factor (89 aa).

This sequence belongs to the MinE family.

Prevents the cell division inhibition by proteins MinC and MinD at internal division sites while permitting inhibition at polar sites. This ensures cell division at the proper site by restricting the formation of a division septum at the midpoint of the long axis of the cell. This chain is Cell division topological specificity factor, found in Clostridium beijerinckii (strain ATCC 51743 / NCIMB 8052) (Clostridium acetobutylicum).